The following is a 651-amino-acid chain: Acetyl-coenzyme A synthetase (651 aa).

Residues 189 to 192 (RGGK), threonine 311, and asparagine 335 contribute to the CoA site. Residues 387–389 (GEP), 411–416 (DTWWQT), aspartate 500, and arginine 515 contribute to the ATP site. A CoA-binding site is contributed by serine 523. Arginine 526 lines the ATP pocket. Valine 537, histidine 539, and valine 542 together coordinate Mg(2+). Arginine 586 is a CoA binding site. Lysine 611 bears the N6-acetyllysine mark.

The protein belongs to the ATP-dependent AMP-binding enzyme family. Mg(2+) is required as a cofactor. Acetylated. Deacetylation by the SIR2-homolog deacetylase activates the enzyme.

The catalysed reaction is acetate + ATP + CoA = acetyl-CoA + AMP + diphosphate. Its function is as follows. Catalyzes the conversion of acetate into acetyl-CoA (AcCoA), an essential intermediate at the junction of anabolic and catabolic pathways. AcsA undergoes a two-step reaction. In the first half reaction, AcsA combines acetate with ATP to form acetyl-adenylate (AcAMP) intermediate. In the second half reaction, it can then transfer the acetyl group from AcAMP to the sulfhydryl group of CoA, forming the product AcCoA. In Brucella suis (strain ATCC 23445 / NCTC 10510), this protein is Acetyl-coenzyme A synthetase.